The sequence spans 837 residues: Zinc fingers and homeoboxes protein 2 (837 aa).

The interaction with EFNB1 stretch occupies residues 27–77; that stretch reads VDRAKEKGIGTPQPDVAKDSWAAELENSSKENEVIEVKSMGESQSKKLQGG. Position 37 is a phosphothreonine (Thr-37). Lys-64 is covalently cross-linked (Glycyl lysine isopeptide (Lys-Gly) (interchain with G-Cter in SUMO2)). 2 C2H2-type zinc fingers span residues 78-101 and 110-133; these read YECKYCPYSTQNLNEFTEHVDMQH and YVCAECNFTTKKYDSLSDHNSKFH. Over residues 164 to 180 the composition is skewed to low complexity; sequence SITTSGPGTGDSDSGIS. The tract at residues 164–204 is disordered; sequence SITTSGPGTGDSDSGISVSKTPIMKPGKPKADAKKVPKKPE. A compositionally biased stretch (basic and acidic residues) spans 192-204; that stretch reads PKADAKKVPKKPE. The required for homodimerization stretch occupies residues 195–358; the sequence is DAKKVPKKPE…PAQLAPTKVT (164 aa). A Phosphothreonine modification is found at Thr-207. DNA-binding regions (homeobox) lie at residues 263 to 324, 439 to 501, 530 to 591, and 628 to 690; these read NTTK…WSPE, TPAS…IVHI, PQKF…EQAV, and SPSP…TVKW. Residues 263–446 form a required for repressor activity region; it reads NTTKYNSALD…PLTPASDRKK (184 aa). Residues 263–497 form a required for interaction with NFYA region; that stretch reads NTTKYNSALD…SDHRYRCQRG (235 aa). Residues 317 to 446 are required for nuclear localization; that stretch reads HGISWSPEEV…PLTPASDRKK (130 aa). The interval 404–445 is disordered; that stretch reads GQKRPLVTPQAAPEPKRPHIAQVPEPPPKVANPPLTPASDRK. The span at 427–439 shows a compositional bias: pro residues; it reads PEPPPKVANPPLT. A Glycyl lysine isopeptide (Lys-Gly) (interchain with G-Cter in SUMO2) cross-link involves residue Lys-455. The segment at 755 to 837 is disordered; it reads PAKDCLPAKP…DCVPAEAGQA (83 aa). 2 positions are modified to phosphoserine: Ser-825 and Ser-827.

It belongs to the ZHX family. As to quaternary structure, homodimer (via homeobox domain). Heterodimer with ZHX1 (via homeobox domain 1). Heterodimer with ZHX3 (via homeobox domain 1). Heterodimerization with ZHX1 is not necessary for repressor activity. Interacts (via homeobox domain) with NFYA (via N-terminus). Interacts with EFNB1 intracellular domain peptide; the interaction enhances ZHX2 transcriptional repression activity. In terms of tissue distribution, ubiquitously expressed. Expressed in podocytes.

The protein resides in the nucleus. Acts as a transcriptional repressor. Represses the promoter activity of the CDC25C gene stimulated by NFYA. May play a role in retinal development where it regulates the composition of bipolar cell populations, by promoting differentiation of bipolar OFF-type cells. In the brain, may promote maintenance and suppress differentiation of neural progenitor cells in the developing cortex. This is Zinc fingers and homeoboxes protein 2 (ZHX2) from Homo sapiens (Human).